The chain runs to 415 residues: Gamma-glutamyl phosphate reductase (415 aa).

This sequence belongs to the gamma-glutamyl phosphate reductase family.

It localises to the cytoplasm. The catalysed reaction is L-glutamate 5-semialdehyde + phosphate + NADP(+) = L-glutamyl 5-phosphate + NADPH + H(+). It participates in amino-acid biosynthesis; L-proline biosynthesis; L-glutamate 5-semialdehyde from L-glutamate: step 2/2. In terms of biological role, catalyzes the NADPH-dependent reduction of L-glutamate 5-phosphate into L-glutamate 5-semialdehyde and phosphate. The product spontaneously undergoes cyclization to form 1-pyrroline-5-carboxylate. The polypeptide is Gamma-glutamyl phosphate reductase (Mycolicibacterium vanbaalenii (strain DSM 7251 / JCM 13017 / BCRC 16820 / KCTC 9966 / NRRL B-24157 / PYR-1) (Mycobacterium vanbaalenii)).